The chain runs to 354 residues: Uroporphyrinogen decarboxylase (354 aa).

Substrate contacts are provided by residues 27–31 (RQAGR), D77, Y154, T209, and H327.

This sequence belongs to the uroporphyrinogen decarboxylase family. As to quaternary structure, homodimer.

The protein localises to the cytoplasm. It carries out the reaction uroporphyrinogen III + 4 H(+) = coproporphyrinogen III + 4 CO2. The protein operates within porphyrin-containing compound metabolism; protoporphyrin-IX biosynthesis; coproporphyrinogen-III from 5-aminolevulinate: step 4/4. Catalyzes the decarboxylation of four acetate groups of uroporphyrinogen-III to yield coproporphyrinogen-III. The polypeptide is Uroporphyrinogen decarboxylase (Citrobacter koseri (strain ATCC BAA-895 / CDC 4225-83 / SGSC4696)).